The following is a 410-amino-acid chain: Argininosuccinate synthase (410 aa).

8–16 (AYSGGLDTS) provides a ligand contact to ATP. Tyrosine 86 provides a ligand contact to L-citrulline. ATP is bound at residue glycine 116. L-aspartate contacts are provided by threonine 118, asparagine 122, and aspartate 123. Residue asparagine 122 coordinates L-citrulline. Positions 126, 174, 259, and 271 each coordinate L-citrulline.

It belongs to the argininosuccinate synthase family. Type 1 subfamily. In terms of assembly, homotetramer.

It is found in the cytoplasm. The enzyme catalyses L-citrulline + L-aspartate + ATP = 2-(N(omega)-L-arginino)succinate + AMP + diphosphate + H(+). Its pathway is amino-acid biosynthesis; L-arginine biosynthesis; L-arginine from L-ornithine and carbamoyl phosphate: step 2/3. The polypeptide is Argininosuccinate synthase (Leuconostoc citreum (strain KM20)).